Consider the following 636-residue polypeptide: Chaperone protein DnaK2 (636 aa).

Residue Thr-198 is modified to Phosphothreonine; by autocatalysis. The span at 604 to 618 (EAGVGAPGAGPEAGT) shows a compositional bias: low complexity. A disordered region spans residues 604-636 (EAGVGAPGAGPEAGTSSGGGDDVIDAEFSEPEK). Over residues 625 to 636 (DVIDAEFSEPEK) the composition is skewed to acidic residues.

This sequence belongs to the heat shock protein 70 family.

In terms of biological role, acts as a chaperone. This is Chaperone protein DnaK2 (dnaK2) from Synechocystis sp. (strain ATCC 27184 / PCC 6803 / Kazusa).